The primary structure comprises 187 residues: ATP synthase subunit delta, chloroplastic (187 aa).

This sequence belongs to the ATPase delta chain family. As to quaternary structure, F-type ATPases have 2 components, F(1) - the catalytic core - and F(0) - the membrane proton channel. F(1) has five subunits: alpha(3), beta(3), gamma(1), delta(1), epsilon(1). CF(0) has four main subunits: a(1), b(1), b'(1) and c(10-14). The alpha and beta chains form an alternating ring which encloses part of the gamma chain. F(1) is attached to F(0) by a central stalk formed by the gamma and epsilon chains, while a peripheral stalk is formed by the delta, b and b' chains.

It localises to the plastid. The protein localises to the chloroplast thylakoid membrane. Its function is as follows. F(1)F(0) ATP synthase produces ATP from ADP in the presence of a proton or sodium gradient. F-type ATPases consist of two structural domains, F(1) containing the extramembraneous catalytic core and F(0) containing the membrane proton channel, linked together by a central stalk and a peripheral stalk. During catalysis, ATP synthesis in the catalytic domain of F(1) is coupled via a rotary mechanism of the central stalk subunits to proton translocation. In terms of biological role, this protein is part of the stalk that links CF(0) to CF(1). It either transmits conformational changes from CF(0) to CF(1) or is implicated in proton conduction. This chain is ATP synthase subunit delta, chloroplastic, found in Thalassiosira pseudonana (Marine diatom).